Consider the following 138-residue polypeptide: ATP synthase epsilon chain (138 aa).

This sequence belongs to the ATPase epsilon chain family. F-type ATPases have 2 components, CF(1) - the catalytic core - and CF(0) - the membrane proton channel. CF(1) has five subunits: alpha(3), beta(3), gamma(1), delta(1), epsilon(1). CF(0) has three main subunits: a, b and c.

The protein localises to the cell inner membrane. In terms of biological role, produces ATP from ADP in the presence of a proton gradient across the membrane. This chain is ATP synthase epsilon chain, found in Cupriavidus metallidurans (strain ATCC 43123 / DSM 2839 / NBRC 102507 / CH34) (Ralstonia metallidurans).